The chain runs to 926 residues: MAASQNPIQGSLFGGNEESDLNKAEKLKGSERSNVNLSHQQLKEDASLRPRIKQTPKNPNQIIDLDELSRLAIEEPKWSHHNLPKIDDLTPALRHYVELKKENPDRVLLYRLGDFFECFFEDAITLSKLLEITLTSKEAGKKIGKIPMAGIPHHASDRYCTELIKKGLSIAICDQLEAAPTKGNKLIKRGITRLITPGTILEEGMLSAKKNNWLASVLLEAKSNQEIIDWSLAKIDVSTGEFIVQEGQGSNNLRHELIKLNAAEVISEKKSISNKIWYEGLIEITEFNRTSFSNLEAITTIKNHYCLNNIDSLGIHSNSLSIRTIGGLISYLNKTHPNIDDKSNNEIKTNICIDYPRIKNSRSGLIIDSQTRRNLEITSTQKDGKFQGSLLWAIDKTLTAMGARCIRRWIEEPTKDVNAIKNRQNIIGFLVKSSTLRKNIRKTLRAMGDLERLSGRAGAQQAGARDLVAIAEGINRLPLIKNYLNEPIFDKTKYFDSIINIDKDLIELASKINNQIIDNPPLSLTEGGLFYDGINPVLDGLRNQLDDHNIWLNSQELEERKKSNINNLKLQYHRSFGYFLAVSKSKAINVPDHWIRRQTLTNEERFVTPGLKEREGKIFQVRARISELEYELFCDLRKLTGSKSNIIRQAAKAISHLDVLTGLAELAANHNYIQPQIIDMNEQDKSRKLSIIDGRHPVVEQILVDKVFVPNDIELGSKTDLIILSGPNASGKSCYLRQVGLLQIMAQIGSWIPAKSAHMGIADQVFTRVGAVDDLASGQSTFMVEMIETAFILNNATENSLVLLDEIGRGTSTFDGLSIAWSVSEFLAKKIKSRSIFATHYHELNQISEYIENVENYKVVVEYKNHSLSFLHKVERGGANKSYGIEAARLAGVPPDVVNNARLILKNLEKNNSNTIQITKPIESCK.

The disordered stretch occupies residues Met1–Asn60. The span at Asp20 to Glu31 shows a compositional bias: basic and acidic residues. Gly726–Ser733 is a binding site for ATP.

This sequence belongs to the DNA mismatch repair MutS family.

Functionally, this protein is involved in the repair of mismatches in DNA. It is possible that it carries out the mismatch recognition step. This protein has a weak ATPase activity. The sequence is that of DNA mismatch repair protein MutS from Prochlorococcus marinus (strain NATL2A).